Consider the following 389-residue polypeptide: Putative DNA processing protein DprA (389 aa).

It belongs to the DprA/Smf family.

Functionally, may help load RecA onto ssDNA. The sequence is that of Putative DNA processing protein DprA from Mycobacterium tuberculosis (strain CDC 1551 / Oshkosh).